Here is a 368-residue protein sequence, read N- to C-terminus: MKNNELDVNQFLIRTDLAVETKQAVKDGQAGQKKEINGFIEKERDKGGIKVRTVDITKEGAELSGKKQGRYVTIEAQGVREHDSDMQEKVTEVFAEEFSAYLSALKIPKDASCLIVGLGNWNVTPDALGPLVTENLLVTRHLFRLQPENVQEGYRPVSALAPGVMGLTGIETSDIIQGVIKESKPDFVIAVDALAARAVERVNTTIQFSDTGIHPGSGVGNKRKELSKETLGIPVIAIGVPTVVDAVTIASDTVDYILKHFGREMKDDSPSRSLVPAGMNFGKKKVLTDEDLPGEKERQSFLGIVGTLDENEKRQLIHEVLSPLGHNLMVTPKEIDTFIDDMANVLANGLNTALHEKVSQDNKGSYNH.

The propeptide occupies 1–16 (MKNNELDVNQFLIRTD).

It belongs to the peptidase A25 family. As to quaternary structure, homotetramer. Post-translationally, autoproteolytically processed. The inactive tetrameric zymogen termed p46 autoprocesses to a smaller form termed p41, which is active only during spore germination.

It carries out the reaction Endopeptidase action with P4 Glu or Asp, P1 preferably Glu &gt; Asp, P1' hydrophobic and P2' Ala.. Functionally, initiates the rapid degradation of small, acid-soluble proteins during spore germination. This chain is Germination protease, found in Bacillus velezensis (strain DSM 23117 / BGSC 10A6 / LMG 26770 / FZB42) (Bacillus amyloliquefaciens subsp. plantarum).